The primary structure comprises 402 residues: Arginine deiminase (402 aa).

Cys-391 (amidino-cysteine intermediate) is an active-site residue.

The protein belongs to the arginine deiminase family.

It localises to the cytoplasm. It catalyses the reaction L-arginine + H2O = L-citrulline + NH4(+). Its pathway is amino-acid degradation; L-arginine degradation via ADI pathway; carbamoyl phosphate from L-arginine: step 1/2. The protein is Arginine deiminase of Mycobacterium marinum (strain ATCC BAA-535 / M).